The following is a 578-amino-acid chain: Triokinase/FMN cyclase (578 aa).

Residues 9–336 enclose the DhaK domain; sequence SVEGCADDAL…IDAETTAKAW (328 aa). Residues 56–59, Lys-109, and Asp-114 each bind dihydroxyacetone; that span reads GSGH. Residue His-221 is the Tele-hemiaminal-histidine intermediate of the active site. Residues 372–571 form the DhaL domain; the sequence is KQMALVLDRI…AAAIFRAILE (200 aa). ATP-binding positions include 401–404, 446–447, Gly-486, and 494–495; these read DGDC, SS, and TM. Phosphoserine occurs at positions 511 and 545. 556–558 serves as a coordination point for ATP; sequence DPG.

The protein belongs to the dihydroxyacetone kinase (DAK) family. As to quaternary structure, homodimer. Interacts with IFIH1 (via the CARD domains), the interaction is inhibited by viral infection. Requires Mg(2+) as cofactor. Mn(2+) is required as a cofactor. Co(2+) serves as cofactor.

It carries out the reaction dihydroxyacetone + ATP = dihydroxyacetone phosphate + ADP + H(+). It catalyses the reaction D-glyceraldehyde + ATP = D-glyceraldehyde 3-phosphate + ADP + H(+). The enzyme catalyses FAD = riboflavin cyclic-4',5'-phosphate + AMP + H(+). Each activity is inhibited by the substrate(s) of the other. In terms of biological role, catalyzes both the phosphorylation of dihydroxyacetone and of glyceraldehyde, and the splitting of ribonucleoside diphosphate-X compounds among which FAD is the best substrate. Represses IFIH1-mediated cellular antiviral response. This chain is Triokinase/FMN cyclase, found in Mus musculus (Mouse).